We begin with the raw amino-acid sequence, 264 residues long: GTP cyclohydrolase FolE2 (264 aa).

This sequence belongs to the GTP cyclohydrolase IV family.

It catalyses the reaction GTP + H2O = 7,8-dihydroneopterin 3'-triphosphate + formate + H(+). It functions in the pathway cofactor biosynthesis; 7,8-dihydroneopterin triphosphate biosynthesis; 7,8-dihydroneopterin triphosphate from GTP: step 1/1. In terms of biological role, converts GTP to 7,8-dihydroneopterin triphosphate. This is GTP cyclohydrolase FolE2 from Vesicomyosocius okutanii subsp. Calyptogena okutanii (strain HA).